The chain runs to 515 residues: Maturase K (515 aa).

This sequence belongs to the intron maturase 2 family. MatK subfamily.

Its subcellular location is the plastid. It is found in the chloroplast. Its function is as follows. Usually encoded in the trnK tRNA gene intron. Probably assists in splicing its own and other chloroplast group II introns. The protein is Maturase K of Cedrus atlantica (Atlas cedar).